A 398-amino-acid polypeptide reads, in one-letter code: Cell division protein FtsZ (398 aa).

GTP is bound by residues 24–28 (GAGGN), 111–113 (GTG), glutamate 154, arginine 158, and aspartate 202. Positions 333–381 (GRNNKSETSPISQSEDSEKEKFKWPYSQSESTQDKTLETKPAEQVSEGA) are disordered. Positions 364–373 (TQDKTLETKP) are enriched in basic and acidic residues.

This sequence belongs to the FtsZ family. Homodimer. Polymerizes to form a dynamic ring structure in a strictly GTP-dependent manner. Interacts directly with several other division proteins.

It is found in the cytoplasm. In terms of biological role, essential cell division protein that forms a contractile ring structure (Z ring) at the future cell division site. The regulation of the ring assembly controls the timing and the location of cell division. One of the functions of the FtsZ ring is to recruit other cell division proteins to the septum to produce a new cell wall between the dividing cells. Binds GTP and shows GTPase activity. This is Cell division protein FtsZ from Wolbachia sp.